A 1115-amino-acid polypeptide reads, in one-letter code: MALRKRSPHGLGFLCCFGGSDLPEIDLRDSHPLQYLEFSGPIPNPEELNVRFAELVDELDLTDKNREAVFALPPEKKWQIYCSKRKEQEDPNKLATSWPEYYIDRINAMAAMQNLYETEDEETDKRNQVVEDLKTALRTQPMRFVTRFIDLEGLTCLLNFLRGMDHTTCESRIHTSLIGCIKALMNNSQGRAHVLAQPEAISIIAQSLRTENSKTKVAVLEILGAVCLVPGGHKKVLQAMLHYQAYAAERTRFQTLLNELDRSLGRYRDEVNLKTAIMSFINAVLNAGAGEDNLEFRLHLRYEFLMLGIQPVIDKLRQHENAILDKHLDFFEMVRNEDDLELARRFDMVHIDTKSASQMFELIHKKLKHTEAYPCLLSVLHHCLQMPYKRNGGYFQQWQLLDRILQQIVLQDERGVDPDLAPLENFNVKNIVNMLINENEVKQWRDQAEKFRKEHMELMSRLERKERECETKTLEKEEMMRTLNKMKDKLARESQELRQARGQVAELVARHNESSTGPVSSPPPPGGPLTLSSSRTTNDLPPPPPPLPFDSCPPPPAPPLPPGGPPIPPGAPPCFSSGPPPSHDPFSSNEAPLRKKRIPQPSHPLKSFNWVKLNEERVSGTVWNEIDDSQVFRILDLEDFEKMFSAYQRHQACMQEGPQRERGNVRDGGAASRPLPAVEASAHRTEKASRSMVSATGAKKELGSTEDIYITSRKVKELSVIDGRRAQNCIILLSKLKLSNDEIRQAILRMDEQEDLAKDMLEQLLKFIPEKSDIDLLEEHKHEIERMARADRFLYEMSRIDHYQQRLQALFFKKKFQERLAEAKPKVEAILLASRELTLSQRLKQMLEVVLAIGNFMNKGQRGGAYGFRVASLNKIADTKSSIDRNISLLHYLIMILEKHFPDILNMPSELKHLSEAAKVNLAELEKEVSILRRGLRAVEVELEYQRHQARDPNDKFVPVMSDFITVSSFSFSELEDQLNEARDKFAKALTHFGEQESKMQPDEFFGIFDTFLQAFLEARQDLEAMRRRKEEDERRARMEFMLKEQREKERWQRQRKVLAGGALEESGEFDDLVSALRSGEVFDKDLSKFKRNRKRPGSQVPEVTRERAINRLNY.

One can recognise a GBD/FH3 domain in the interval 40–416 (GPIPNPEELN…QIVLQDERGV (377 aa)). Residues 434–515 (MLINENEVKQ…ELVARHNESS (82 aa)) are a coiled coil. 2 disordered regions span residues 510-605 (RHNE…SHPL) and 655-697 (QEGP…SATG). In terms of domain architecture, FH1 spans 518-694 (PVSSPPPPGG…TEKASRSMVS (177 aa)). The segment covering 540 to 583 (LPPPPPPLPFDSCPPPPAPPLPPGGPPIPPGAPPCFSSGPPPSH) has biased composition (pro residues). Residues 595–1042 (KKRIPQPSHP…DERRARMEFM (448 aa)) enclose the FH2 domain. One can recognise a DAD domain in the interval 1065–1095 (EESGEFDDLVSALRSGEVFDKDLSKFKRNRK).

It belongs to the formin homology family. In terms of assembly, interacts with DVL3. Interacts with INF2. In early embryogenesis, expression is confined to embryonic ectoderm. Highly dynamic expression in later stages of gastrulation. In early somite stages, detected in posterior node and persists until 9-10 somites have developed when expression is concentrated in the chordoneural hinge. During organogenesis, expressed in the CNS, PNS, liver primordia, limb buds and genital tubercle.

Functionally, key regulator of the Wnt signaling pathway, which is required for various processes during development, such as dorsal patterning, determination of left/right symmetry or myelination in the central nervous system. Acts downstream of Wnt ligands and upstream of beta-catenin (CTNNB1). Required for canonical Wnt signaling pathway during patterning in the dorsal spinal cord by promoting the aggregation of Disheveled (Dvl) complexes, thereby clustering and formation of Wnt receptor signalosomes and potentiating Wnt activity. During dorsal patterning of the spinal cord, inhibits oligodendrocytes differentiation via interaction with PIP5K1A. Also regulates non-canonical Wnt signaling pathway. Acts downstream of PITX2 in the developing gut and is required for left/right asymmetry within dorsal mesentery: affects mesenchymal condensation by lengthening cadherin-based junctions through WNT5A and non-canonical Wnt signaling, inducing polarized condensation in the left dorsal mesentery necessary to initiate gut rotation. Together with DAAM1, required for myocardial maturation and sarcomere assembly. Is a regulator of actin nucleation and elongation, filopodia formation and podocyte migration. This is Disheveled-associated activator of morphogenesis 2 from Mus musculus (Mouse).